The sequence spans 209 residues: Small ribosomal subunit protein eS1 (209 aa).

The protein belongs to the eukaryotic ribosomal protein eS1 family.

The chain is Small ribosomal subunit protein eS1 from Picrophilus torridus (strain ATCC 700027 / DSM 9790 / JCM 10055 / NBRC 100828 / KAW 2/3).